A 135-amino-acid polypeptide reads, in one-letter code: Transcription antitermination protein NusB (135 aa).

The protein belongs to the NusB family.

Functionally, involved in transcription antitermination. Required for transcription of ribosomal RNA (rRNA) genes. Binds specifically to the boxA antiterminator sequence of the ribosomal RNA (rrn) operons. In Nocardioides sp. (strain ATCC BAA-499 / JS614), this protein is Transcription antitermination protein NusB.